Reading from the N-terminus, the 959-residue chain is AP2-associated protein kinase 1 (959 aa).

N-acetylmethionine is present on M1. Over residues 1 to 11 (MKKFFDSRREQ) the composition is skewed to basic and acidic residues. Residues 1-27 (MKKFFDSRREQGSSGLGSGSSGGGGSS) form a disordered region. A Phosphoserine modification is found at S14. Residues 14–27 (SGLGSGSSGGGGSS) are compositionally biased toward gly residues. Residues 46–315 (VTVDEVLAEG…QVSYFSFKLL (270 aa)) form the Protein kinase domain. ATP is bound by residues 52 to 60 (LAEGGFALV) and K74. D176 serves as the catalytic Proton acceptor. Phosphotyrosine is present on Y234. Position 235 is a phosphoserine (S235). The tract at residues 340–385 (SEAAVKKTQPKARLTDPIPTTETSIAPRQRPKAGQTQPNPGILPIQ) is disordered. Phosphothreonine is present on residues T354 and T389. R391 is modified (omega-N-methylarginine). 2 disordered regions span residues 398-514 (PLPQ…AVHP) and 578-630 (TAPQ…RAGH). Positions 404-419 (GPSNQPGLLPSVSQPK) are enriched in polar residues. Low complexity predominate over residues 420–435 (AQATPSQPLQSSQPKQ). T441 is subject to Phosphothreonine. Low complexity-rich tracts occupy residues 444-481 (QTPATQTQGLPTQAQATPQHQQQHLLKQQQQQQQQPQQ), 494-510 (QQQQQQQQQQAQTQQFQ), and 578-603 (TAPQAAAAQEPGQIQAPVRQQPKVQT). T604 carries the post-translational modification Phosphothreonine. Positions 609–625 (IQGQKVGSLTPPSSPKT) are enriched in polar residues. The residue at position 616 (S616) is a Phosphoserine. T618 is modified (phosphothreonine). 4 positions are modified to phosphoserine: S621, S622, S635, and S648. T651 carries the post-translational modification Phosphothreonine. Disordered stretches follow at residues 662-699 (SLNKSKSATTTPSGSPRTSQQNVSNASEGSTWNPFDDD), 727-763 (GGSAESLIPGFQPTQGDAFTTPSFSAGTAEKRKGGQA), 837-857 (PVAQRLPSQTESVTSNRTDSL), and 923-943 (ITKNTQGGHSRNSSGSSESSL). Polar residues predominate over residues 670–694 (TTTPSGSPRTSQQNVSNASEGSTWN). S729 is subject to Phosphoserine. Composition is skewed to polar residues over residues 738 to 752 (QPTQGDAFTTPSFSA) and 842 to 857 (LPSQTESVTSNRTDSL). The tract at residues 821–958 (DKADVAVESL…SLLLVDQLID (138 aa)) is clathrin-binding domain (CBD). S844, S935, and S936 each carry phosphoserine. Residues 929–942 (GGHSRNSSGSSESS) show a composition bias toward low complexity.

This sequence belongs to the protein kinase superfamily. Ser/Thr protein kinase family. Interacts (via CBD domain) with clathrin. Interacts with AP-2 complex. Interacts with NUMB. Interacts with alpha-adaptin. Interacts with EPS15 isoform 2. Interacts with membrane-bound activated NOTCH1 but not with the inactive full-length form of NOTCH1. Preferentially interacts with monoubiquitinated activated NOTCH1 compared to the non-ubiquitinated form. In terms of processing, autophosphorylated.

Its subcellular location is the cell membrane. The protein resides in the membrane. The protein localises to the clathrin-coated pit. It is found in the presynapse. The catalysed reaction is L-seryl-[protein] + ATP = O-phospho-L-seryl-[protein] + ADP + H(+). It carries out the reaction L-threonyl-[protein] + ATP = O-phospho-L-threonyl-[protein] + ADP + H(+). Its activity is regulated as follows. Stimulated by clathrin. Functionally, regulates clathrin-mediated endocytosis by phosphorylating the AP2M1/mu2 subunit of the adaptor protein complex 2 (AP-2) which ensures high affinity binding of AP-2 to cargo membrane proteins during the initial stages of endocytosis. Preferentially, may phosphorylate substrates on threonine residues. Regulates phosphorylation of other AP-2 subunits as well as AP-2 localization and AP-2-mediated internalization of ligand complexes. Phosphorylates NUMB and regulates its cellular localization, promoting NUMB localization to endosomes. Binds to and stabilizes the activated form of NOTCH1, increases its localization in endosomes and regulates its transcriptional activity. The polypeptide is AP2-associated protein kinase 1 (Aak1) (Mus musculus (Mouse)).